Consider the following 1708-residue polypeptide: MEAHQFIKAPGITTAIEQAALAAANSALANAVVVRPFLSRVQTEILINLMQPRQLVFRPEVLWNHPIQRVIHNELEQYCRARAGRCLEVGAHPRSINDNPNVLHRCFLRPVGRDVQRWYSAPTRGPAANCRRSALRGLPPVDRTYCFDGFSRCAFAAETGVALYSLHDLWPADVAEAMARHGMTRLYAALHLPPEVLLPPGTYHTTSYLLIHDGNRAVVTYEGDTSAGYNHDVSILRAWIRTTKIVGDHPLVIERVRAIGCHFVLLLTAAPEPSPMPYVPYPRSTEVYVRSIFGPGGSPSLFPSACSTKSTFHAVPVHIWDXLMLFGATLXDQAFCCSRLMTYLRGISYKVTVGALVANEGWNASEDALTAVITAAYLTICHQRYLRTQAISKGMRRLEVEHAQKFITRLYSWLFEKSGRDYIPGRQLQFYAQCRRWLSAGFHLXPRXLVFDESVPCRCRTFLKKVAGKFCCFMRWLGQECTCFLEPAEGLVGDQGHDNEAYEGSEVDPAEPAHLDVSGTYAVHGHQLEALYRALNVPHDIAARASRLTATVELVASPDRLECRTVLGNKTFRTTVVDGAHLEANGPEEYVLSFDASRQSMGAGSHSLTYELTPAGLQVKISSNGLDCTATFPPGGAPSAAPGEVAAFCSALYRYNRFTQRHSLTGGLWLHPEGLLGIFPPFSPGHIWESANPFCGEGTLYTRTWSTSGFSSDFSPPEAAAPASAAAPGLPYPTPPVSDIWVLPPPSEESHVDAASVPSVPEPAGLTSPIVLTPPPPPPPVRKPATSPPPRTRRLLYTYPDGAKVYAGSLXESDCDWLVNASNPGHRPGGGLCHAFYQRFPEAFYSTEFIMREGLAAYTLTPRPIIHAVAPDYRVEQNPKRLEAAYRETCSRRGTAAYPLLGSGIYQVPVSLSFDAWERNHRPGDELYLTEPAAAWFEANKPAQPALTITEDTARTANLALEIDAATEVGRACAGCTISPGIVHYQFTAGVPGSGKSRSIQQGDVDVVVVPTRELRNSWRRRGFAAFTPHTAARVTIGRRVVIDEAPSLPPHLLLLHMQRASSVHLLGDPNQIPAIDFEHAGLVPAIRPELAPTSWWHVTHRCPADVCELIRGAYPKIQTTSRVLRSLFWNEPAIGQKLVFTQAAKAANPGAITVHEAQGATFTETTIIATADARGLIQSSRAHAIVALTRHTEKCVILDAPGLLREVGISDVIVNNFFLAGGEVGHHRPSVIPRGNPDQNLGTLQAFPPSCQISAYHQLAEELGHRPAPVAAVLPPCPELEQGLLYMPQELTVSDSVLVFELTDIVHCRMAAPSQRKAVLSTLVGRYGRRTKLYEAAHSDVRESLARFIPTIGPVRATTCELYELVEAMVEKGQDGSAVLELDLCNRDVSRITFFQKDCNKFTTGETIAHGKVGQGISAWSKTFCALFGPWFRAIEKEILALLPPNIFYGDAYEESVFAAAVSGAGSCMVFENDFSEFDSTQNNFSLGLECVVMEECGMPQWLIRLYHLVRSAWILQAPKESLKGFWKKHSGEPGTLLWNTVWNMAIIAHCYEFRDFRVAAFKGDDSVVLCSDYRQXRNAAALIAGCGLKLKVDYRPIGLYAGVVVAPGLGTLPDVVRFAGRLSEKNWGPGPERAEQLRLAVCDFLRGLTNVAQVCVDVVSRVYGVSPGLVHNLIGMLQTIADGKAHFTENIKPVLDLTNSIIQRVE.

An Alphavirus-like MT domain is found at 56–240; it reads VFRPEVLWNH…HDVSILRAWI (185 aa). The segment at 60–240 is methyltransferase; sequence EVLWNHPIQR…HDVSILRAWI (181 aa). Positions 241–439 are Y-domain; the sequence is RTTKIVGDHP…FYAQCRRWLS (199 aa). Residues Cys434 and Cys481 are joined by a disulfide bond. The segment at 442–509 is putative protease; sequence FHLXPRXLVF…EAYEGSEVDP (68 aa). A zinc-binding region spans residues 510–691; that stretch reads AEPAHLDVSG…FSPGHIWESA (182 aa). Residues His671, Glu673, and His686 each coordinate Zn(2+). Residues 714-793 are hinge; sequence FSPPEAAAPA…PATSPPPRTR (80 aa). The interval 747-792 is disordered; the sequence is SEESHVDAASVPSVPEPAGLTSPIVLTPPPPPPPVRKPATSPPPRT. Residues 772-790 are compositionally biased toward pro residues; sequence LTPPPPPPPVRKPATSPPP. One can recognise a Macro domain in the interval 790–936; it reads PRTRRLLYTY…LYLTEPAAAW (147 aa). Residues 800–957 form an X-domain region; that stretch reads PDGAKVYAGS…TITEDTARTA (158 aa). The (+)RNA virus helicase ATP-binding domain occupies 949-1097; the sequence is ITEDTARTAN…RPELAPTSWW (149 aa). The tract at residues 975–1219 is NTPase/helicase; sequence GCTISPGIVH…ISDVIVNNFF (245 aa). 990 to 997 provides a ligand contact to ATP; the sequence is GVPGSGKS. Residues 1098–1231 enclose the (+)RNA virus helicase C-terminal domain; it reads HVTHRCPADV…GGEVGHHRPS (134 aa). Positions 1222 to 1708 are RNA-directed RNA polymerase; sequence GGEVGHHRPS…LTNSIIQRVE (487 aa). Residues 1469-1580 enclose the RdRp catalytic domain; it reads CMVFENDFSE…LCSDYRQXRN (112 aa).

This sequence belongs to the hepevirus non-structural polyprotein family. In terms of assembly, the protease domain interacts with host EIF2AK4 (via C-terminus); this interaction inhibits dimerization of EIF2AK4 and prevents EIF2AK4-mediated phosphorylation of host EIF2A. The cofactor is Mg(2+). Post-translationally, ORF1 polyprotein does not seem to be processed into distinct enzymatic domains by a viral protease belonging to ORF1, but could be processed by a host serine protease like thrombin.

It localises to the host cytoplasm. The protein localises to the host perinuclear region. It carries out the reaction RNA(n) + a ribonucleoside 5'-triphosphate = RNA(n+1) + diphosphate. It catalyses the reaction GTP + S-adenosyl-L-methionine = N(7)-methyl-GTP + S-adenosyl-L-homocysteine. Its activity is regulated as follows. Putative protease: Inhibited by chymostatin. Methyltransferase: Displays a capping enzyme activity. This function is necessary since all viral RNAs are synthesized in the cytoplasm, and host capping enzymes are restricted to the nucleus. The enzymatic reaction involves a covalent link between 7-methyl-GMP and the methyltransferase, whereas eukaryotic capping enzymes form a covalent complex only with GMP. Methyltransferase catalyzes transfer of a methyl group from S-adenosylmethionine to GTP and GDP to yield m(7)GTP or m(7)GDP. GDP is a better substrate than GTP. This enzyme also displays guanylyltransferase activity to form a covalent complex, methyltransferase-m(7)GMP, from which 7-methyl-GMP is transferred to the mRNA to create the cap structure. In terms of biological role, Y-domain: Indispensable for virus replication. Its function is as follows. Putative protease: The putative protease domain although necessary for replication of the virus may not be a protease but rather a structural Zn(2+)-binding domain. Inhibits induction of IFN-beta by MDA5 and RIG-I pathways and down-regulates the expression of MDA5. Functionally, NTPase/helicase: Multi-functional protein that exhibits NTPase and RNA unwinding activities. Hydrolyzes all NTPs efficiently and unwinds RNA duplexes containing 5' overhangs. Possesses a sequence independent RNA-5'-triphosphatase (RTPase) activity suggestive of its role in forming viral cap structure. Also participates in viral genome replication, RNA translocation and genome packaging/unpackaging. RNA-directed RNA polymerase: Plays an essential role in the virus replication. Binds to the 3'-end of the genomic RNA to initiate viral replication. This chain is Non-structural polyprotein pORF1, found in Bandicota bengalensis (lesser bandicoot rat).